The primary structure comprises 967 residues: uncharacterized protein (967 aa).

Disordered stretches follow at residues 1 to 23 (MQNA…FHDR) and 41 to 72 (FTMH…DPRT). Residues 14–23 (KGRDVNFHDR) are compositionally biased toward basic and acidic residues. The segment covering 60–72 (RLSNYSSAVDPRT) has biased composition (polar residues). At Ser86 the chain carries Phosphoserine. Disordered stretches follow at residues 135–259 (AVSE…QHLP), 271–296 (SVSR…SPPE), 380–399 (DSTT…APHK), 437–464 (HSYG…FVAD), and 499–544 (GTRF…KSLS). Over residues 162–187 (ESSTSNNLETGNSTNTALHNVSSPLE) the composition is skewed to polar residues. Residues 205–218 (HDLDEVISEKDTSL) are compositionally biased toward basic and acidic residues. Over residues 221–234 (RSSRGRSSAPKRRK) the composition is skewed to basic residues. Residues 278-294 (SPASTPRSSVSSVSSSP) show a composition bias toward low complexity. Over residues 382-394 (TTEYVNTESSSKT) the composition is skewed to polar residues. The span at 499 to 508 (GTRFHSRSSH) shows a compositional bias: basic residues. At Ser585 the chain carries Phosphoserine. Disordered regions lie at residues 594–665 (ESNE…SVND) and 681–708 (DHRI…ESQH). Residues 608–622 (YDSRESTGHTIKELR) are compositionally biased toward basic and acidic residues. Positions 686–704 (ASDNQNNNNNDANALAENS) are enriched in low complexity. A substrate-binding site is contributed by 728 to 736 (PCVLDVKMG).

The protein belongs to the inositol phosphokinase (IPK) family.

It localises to the cytoplasm. This is an uncharacterized protein from Schizosaccharomyces pombe (strain 972 / ATCC 24843) (Fission yeast).